A 273-amino-acid chain; its full sequence is Phosphate import ATP-binding protein PstB (273 aa).

An ABC transporter domain is found at 27-268; that stretch reads VTVRNLNFYY…PSDRRTQDYI (242 aa). 59-66 contacts ATP; it reads GPSGCGKS.

It belongs to the ABC transporter superfamily. Phosphate importer (TC 3.A.1.7) family. The complex is composed of two ATP-binding proteins (PstB), two transmembrane proteins (PstC and PstA) and a solute-binding protein (PstS).

It is found in the cell inner membrane. It carries out the reaction phosphate(out) + ATP + H2O = ADP + 2 phosphate(in) + H(+). Functionally, part of the ABC transporter complex PstSACB involved in phosphate import. Responsible for energy coupling to the transport system. This chain is Phosphate import ATP-binding protein PstB, found in Bradyrhizobium diazoefficiens (strain JCM 10833 / BCRC 13528 / IAM 13628 / NBRC 14792 / USDA 110).